The chain runs to 342 residues: uncharacterized protein (342 aa).

This is an uncharacterized protein from Magallana gigas (Pacific oyster).